Consider the following 327-residue polypeptide: Nuclear apoptosis-inducing factor 1 (327 aa).

Residues 1–70 (MAVPAKKRKM…CRRELPEVKK (70 aa)) form a required for nuclear localization and apoptosis-inducing activity region. Over residues 88–98 (AAVEGGEAPGP) the composition is skewed to low complexity. 2 disordered regions span residues 88–118 (AAVE…AGGP) and 303–327 (NMPN…SIIQ). The segment covering 104–117 (AGGPGTGGGSGAGG) has biased composition (gly residues). Residues 316–327 (VAQNGQPDSIIQ) are compositionally biased toward polar residues.

Belongs to the NAIF1 family. In terms of assembly, interacts with HARBI1.

The protein localises to the nucleus. In terms of biological role, induces apoptosis. The sequence is that of Nuclear apoptosis-inducing factor 1 (NAIF1) from Bos taurus (Bovine).